We begin with the raw amino-acid sequence, 258 residues long: Ribosomal RNA small subunit methyltransferase A (258 aa).

Residues H13, L15, G40, E62, D87, and N108 each contribute to the S-adenosyl-L-methionine site.

It belongs to the class I-like SAM-binding methyltransferase superfamily. rRNA adenine N(6)-methyltransferase family. RsmA subfamily.

It is found in the cytoplasm. It catalyses the reaction adenosine(1518)/adenosine(1519) in 16S rRNA + 4 S-adenosyl-L-methionine = N(6)-dimethyladenosine(1518)/N(6)-dimethyladenosine(1519) in 16S rRNA + 4 S-adenosyl-L-homocysteine + 4 H(+). Functionally, specifically dimethylates two adjacent adenosines (A1518 and A1519) in the loop of a conserved hairpin near the 3'-end of 16S rRNA in the 30S particle. May play a critical role in biogenesis of 30S subunits. In Sulfurihydrogenibium sp. (strain YO3AOP1), this protein is Ribosomal RNA small subunit methyltransferase A.